Here is a 332-residue protein sequence, read N- to C-terminus: Transcription factor ZEB2 (332 aa).

The interval 1–37 (MQSTESFHALPTRSDVEDPNERRKIQNRIAQKKHRQK) is disordered. The segment covering 14–24 (SDVEDPNERRK) has biased composition (basic and acidic residues). The region spanning 17-50 (EDPNERRKIQNRIAQKKHRQKMKRRIEELETKVN) is the bZIP domain. A basic motif region spans residues 21-43 (ERRKIQNRIAQKKHRQKMKRRIE). Positions 45-52 (LETKVNNQ) are leucine-zipper. The disordered stretch occupies residues 106-170 (MHDSPRPNQQ…EGSLPTRQHD (65 aa)). Residues 111 to 134 (RPNQQQRLSVSGMPSSPTSTSNVA) show a composition bias toward polar residues. Low complexity predominate over residues 143-155 (HSSASNHLSSLSL). The span at 160-170 (TEGSLPTRQHD) shows a compositional bias: polar residues.

The protein belongs to the bZIP family.

The protein resides in the nucleus. In terms of biological role, transcription factor that specifically controls transcription of the zearalenone biosynthesis cluster genes. This chain is Transcription factor ZEB2, found in Gibberella zeae (strain ATCC MYA-4620 / CBS 123657 / FGSC 9075 / NRRL 31084 / PH-1) (Wheat head blight fungus).